Here is a 23-residue protein sequence, read N- to C-terminus: Glutamine synthetase (23 aa).

This sequence belongs to the glutamine synthetase family. In terms of assembly, oligomer of 12 subunits arranged in the form of two hexagons. It depends on Mg(2+) as a cofactor.

It localises to the cytoplasm. The catalysed reaction is L-glutamate + NH4(+) + ATP = L-glutamine + ADP + phosphate + H(+). With respect to regulation, the activity of this enzyme could be controlled by adenylation under conditions of abundant glutamine. In terms of biological role, involved in nitrogen metabolism via ammonium assimilation. Catalyzes the ATP-dependent biosynthesis of glutamine from glutamate and ammonia. The chain is Glutamine synthetase from Phormidium lapideum.